A 277-amino-acid polypeptide reads, in one-letter code: Putative endonuclease (277 aa).

Putative endonuclease. The polypeptide is Putative endonuclease (Escherichia coli (Enterobacteria phage T5)).